A 148-amino-acid polypeptide reads, in one-letter code: Snaclec 7 (148 aa).

Residues 1–23 form the signal peptide; sequence MGRFIFVSFGLLVVFLSLSGTGA. Disulfide bonds link cysteine 27–cysteine 38, cysteine 55–cysteine 144, and cysteine 121–cysteine 136. Residues 34–145 form the C-type lectin domain; sequence HERHCYKVIN…CSSTHPFVCK (112 aa).

This sequence belongs to the snaclec family. Heterodimer; disulfide-linked. In terms of tissue distribution, expressed by the venom gland.

Its subcellular location is the secreted. Functionally, interferes with one step of hemostasis (modulation of platelet aggregation, or coagulation cascade, for example). The polypeptide is Snaclec 7 (Echis pyramidum leakeyi (Leakey's carpet viper)).